Here is a 429-residue protein sequence, read N- to C-terminus: MSRADDDAVGVPPTCGGRSDEEERRIVPGPNPQDGAKDGAKATAVPREPDEAALAAMSNQELLALGGKLDGVRIAYKEPRWPVEGTKAEKRAERSVAVWLLLGGVFGLALLLIFLFWPWEFKAADGESDFIYSLTTPLYGLTFGLSILSIAIGAVLYQKRFIPEEISIQERHDGASREIDRKTVVANLTDAFEGSTIRRRKLIGLSFGVGMGAFGLGTLVAFAGGLIKNPWKPVVPTAEGKKAVLWTSGWTPRYQGETIYLARATGTEDGPPFIKMRPEDMDAGGMETVFPWRESDGDGTTVESHHKLQEIAMGIRNPVMLIRIKPSDLGRVVKRKGQESFNFGEFFAFTKVCSHLGCPSSLYEQQSYRILCPCHQSQFDALHFAKPIFGPAARALAQLPITIDTDGYLVANGDFVEPVGPAFWERTTT.

Residues 1–45 (MSRADDDAVGVPPTCGGRSDEEERRIVPGPNPQDGAKDGAKATAV) are disordered. 3 helical membrane-spanning segments follow: residues 96-116 (VAVWLLLGGVFGLALLLIFLF), 137-157 (PLYGLTFGLSILSIAIGAVLY), and 207-227 (FGVGMGAFGLGTLVAFAGGLI). The Rieske domain occupies 316-410 (RNPVMLIRIK…ITIDTDGYLV (95 aa)). [2Fe-2S] cluster is bound by residues C353, H355, C372, and H375. C358 and C374 are disulfide-bonded.

It belongs to the Rieske iron-sulfur protein family. As to quaternary structure, the cytochrome bc1 complex is composed of a cytochrome b (QcrB), the Rieske iron-sulfur protein (QcrA) and a diheme cytochrome c (QcrC) subunit. [2Fe-2S] cluster is required as a cofactor.

The protein resides in the cell membrane. Iron-sulfur subunit of the cytochrome bc1 complex, an essential component of the respiratory electron transport chain required for ATP synthesis. The bc1 complex catalyzes the oxidation of menaquinol and the reduction of cytochrome c in the respiratory chain. The bc1 complex operates through a Q-cycle mechanism that couples electron transfer to generation of the proton gradient that drives ATP synthesis. In Mycobacterium tuberculosis (strain CDC 1551 / Oshkosh), this protein is Cytochrome bc1 complex Rieske iron-sulfur subunit (qcrA).